A 701-amino-acid polypeptide reads, in one-letter code: Polyribonucleotide nucleotidyltransferase (701 aa).

Asp-485 and Asp-491 together coordinate Mg(2+). Positions 552–611 constitute a KH domain; that stretch reads PRIIKIRINPEKIRDVIGKGGAVIRALTEETGTTIDITDDGTVMIACVNAEGGELAKKRI. One can recognise an S1 motif domain in the interval 621–689; it reads GRVYDGTVLK…DKGRLRLSMK (69 aa).

This sequence belongs to the polyribonucleotide nucleotidyltransferase family. The cofactor is Mg(2+).

It localises to the cytoplasm. It carries out the reaction RNA(n+1) + phosphate = RNA(n) + a ribonucleoside 5'-diphosphate. In terms of biological role, involved in mRNA degradation. Catalyzes the phosphorolysis of single-stranded polyribonucleotides processively in the 3'- to 5'-direction. The chain is Polyribonucleotide nucleotidyltransferase from Nitrosospira multiformis (strain ATCC 25196 / NCIMB 11849 / C 71).